We begin with the raw amino-acid sequence, 482 residues long: BEL1-like homeodomain protein 7 (482 aa).

Positions S118 to V134 are SR/KY domain. The segment at E167–I238 is BELL domain. The segment at residues T285–M347 is a DNA-binding region (homeobox). The tract at residues D358–R401 is disordered. Over residues N363–R401 the composition is skewed to polar residues.

This sequence belongs to the TALE/BELL homeobox family. As to quaternary structure, may form heterodimeric complexes with TALE/KNOX proteins.

Its subcellular location is the nucleus. This chain is BEL1-like homeodomain protein 7 (BLH7), found in Arabidopsis thaliana (Mouse-ear cress).